The chain runs to 1756 residues: Multifunctional conjugation protein TraI (1756 aa).

Residues 1–330 (MLSFSVVKSA…TQAIAGLSER (330 aa)) form a DNA relaxase region. Catalysis depends on tyrosine 16, which acts as the O-(5'-phospho-DNA)-tyrosine intermediate; for relaxase activity. Tyrosine 17 serves as the catalytic Relaxase. 3 residues coordinate Mg(2+): histidine 146, histidine 157, and histidine 159. Positions 950–1500 (GKEAVTPLME…LRDVAAGRAV (551 aa)) are DNA helicase I. 992–999 (GYAGVGKT) is a binding site for ATP. Positions 1719–1753 (EQEAVREVARENLLQERLQQIERDMVRDLQKEKTL) form a coiled coil.

To TraI of plasmid F. Monomer. Part of the relaxosome, a complex composed of plasmid-encodes TraI, TraM, TraY and host-encoded IHF bound to the F plasmid origin of transfer (oriT). Directly contacts coupling protein TraD. Seems to directly contact TraM via its C-terminus. The cofactor is Mg(2+).

The protein resides in the cytoplasm. It carries out the reaction ATP-independent breakage of single-stranded DNA, followed by passage and rejoining.. The enzyme catalyses ATP + H2O = ADP + phosphate + H(+). Its function is as follows. Conjugative DNA transfer (CDT) is the unidirectional transfer of ssDNA plasmid from a donor to a recipient cell. It is the central mechanism by which antibiotic resistance and virulence factors are propagated in bacterial populations. Part of the relaxosome, which facilitates a site- and strand-specific cut in the origin of transfer by TraI, at the nic site. Relaxosome formation requires binding of IHF and TraY to the oriT region, which then facilitates binding of TraI relaxase. TraI forms a covalent 5'-phosphotyrosine intermediate linkage to the ssDNA. The transesterified T-strand moves from the donor cell to the recipient cell in a 5'to 3' direction, with the DNA helicase activity of TraI unwinding the DNA. DNA transfer occurs via the conjugative pore (transferosome) an intercellular junction mediated by a type IV secretion system, with TraD providing the means to link the relaxosome to the conjugative pore. The relaxase completes DNA transfer by reversing the covalent phosphotyrosine linkage and releasing the T-strand. TraI has also been identified as DNA helicase I. DNA. helicase I is a potent, highly processive DNA-dependent ATPase, able to unwind about 1.1 kb dsDNA per second in a 5' to 3' manner. The chain is Multifunctional conjugation protein TraI (traI) from Escherichia coli.